Consider the following 128-residue polypeptide: Ribonuclease pancreatic B (128 aa).

The tract at residues 1 to 21 (AESSAMKFQRQHMDPEGSPSN) is disordered. Substrate is bound by residues K7 and R10. H12 functions as the Proton acceptor in the catalytic mechanism. 2 N-linked (GlcNAc...) asparagine glycosylation sites follow: N21 and N34. 4 disulfides stabilise this stretch: C26/C84, C40/C95, C58/C110, and C65/C72. Substrate is bound by residues 41–45 (KPVNT), K66, and R85. The Proton donor role is filled by H119.

It belongs to the pancreatic ribonuclease family. Pancreas.

It localises to the secreted. It catalyses the reaction an [RNA] containing cytidine + H2O = an [RNA]-3'-cytidine-3'-phosphate + a 5'-hydroxy-ribonucleotide-3'-[RNA].. The catalysed reaction is an [RNA] containing uridine + H2O = an [RNA]-3'-uridine-3'-phosphate + a 5'-hydroxy-ribonucleotide-3'-[RNA].. This is Ribonuclease pancreatic B from Cavia porcellus (Guinea pig).